Reading from the N-terminus, the 396-residue chain is CCA-adding enzyme (396 aa).

ATP-binding residues include Gly-32 and Arg-35. 2 residues coordinate CTP: Gly-32 and Arg-35. Positions 45 and 47 each coordinate Mg(2+). ATP is bound by residues Arg-116, Asp-159, Arg-162, Arg-165, and Arg-168. 5 residues coordinate CTP: Arg-116, Asp-159, Arg-162, Arg-165, and Arg-168.

It belongs to the tRNA nucleotidyltransferase/poly(A) polymerase family. Bacterial CCA-adding enzyme type 3 subfamily. In terms of assembly, homodimer. It depends on Mg(2+) as a cofactor.

It catalyses the reaction a tRNA precursor + 2 CTP + ATP = a tRNA with a 3' CCA end + 3 diphosphate. The catalysed reaction is a tRNA with a 3' CCA end + 2 CTP + ATP = a tRNA with a 3' CCACCA end + 3 diphosphate. Catalyzes the addition and repair of the essential 3'-terminal CCA sequence in tRNAs without using a nucleic acid template. Adds these three nucleotides in the order of C, C, and A to the tRNA nucleotide-73, using CTP and ATP as substrates and producing inorganic pyrophosphate. tRNA 3'-terminal CCA addition is required both for tRNA processing and repair. Also involved in tRNA surveillance by mediating tandem CCA addition to generate a CCACCA at the 3' terminus of unstable tRNAs. While stable tRNAs receive only 3'-terminal CCA, unstable tRNAs are marked with CCACCA and rapidly degraded. The chain is CCA-adding enzyme from Lactobacillus delbrueckii subsp. bulgaricus (strain ATCC 11842 / DSM 20081 / BCRC 10696 / JCM 1002 / NBRC 13953 / NCIMB 11778 / NCTC 12712 / WDCM 00102 / Lb 14).